Consider the following 427-residue polypeptide: Forkhead box protein A1-B (427 aa).

The fork-head DNA-binding region spans 157–251 (KPPYSYISLI…ENGCYLRRQK (95 aa)). A compositionally biased stretch (basic and acidic residues) spans 256 to 272 (EKTQGGKGNQDGRKDHS). The interval 256-336 (EKTQGGKGNQ…HQNHSTHSLA (81 aa)) is disordered. The span at 285–302 (SSQMDSSSSMSNPSSSPQ) shows a compositional bias: low complexity. A compositionally biased stretch (polar residues) spans 323–334 (PLSSHQNHSTHS).

As to expression, present in the vegetal pole and marginal zone but not the animal pole of gastrulae and in equal levels in the dorsal and ventral halves of both gastrulae and neurulae. At neurula stage, expressed in the notochord. During tailbud stages, expressed in the foregut, brain, hypocord, neural floor plate and in two lines of cells just dorsal and ventral to the notochord. Expressed in the adult liver.

Its subcellular location is the nucleus. Functionally, probable transcription factor. The protein is Forkhead box protein A1-B (foxa1-b) of Xenopus laevis (African clawed frog).